A 372-amino-acid polypeptide reads, in one-letter code: uncharacterized protein (372 aa).

The interval 328-353 is disordered; that stretch reads KKGQPCKDEDAVTVPLPSSDPGKETQ.

Its function is as follows. Induces the SOS system when expressed in E.coli, therefore, it may play a role in DNA metabolism and/or in genome stability. This is an uncharacterized protein from Saccharomyces cerevisiae (strain ATCC 204508 / S288c) (Baker's yeast).